A 208-amino-acid chain; its full sequence is Small ribosomal subunit protein uS4 (208 aa).

An S4 RNA-binding domain is found at 98-161; that stretch reads RRLDNVIYRL…RKIPVLAEAQ (64 aa).

The protein belongs to the universal ribosomal protein uS4 family. Part of the 30S ribosomal subunit. Contacts protein S5. The interaction surface between S4 and S5 is involved in control of translational fidelity.

In terms of biological role, one of the primary rRNA binding proteins, it binds directly to 16S rRNA where it nucleates assembly of the body of the 30S subunit. Functionally, with S5 and S12 plays an important role in translational accuracy. The polypeptide is Small ribosomal subunit protein uS4 (Nitratidesulfovibrio vulgaris (strain ATCC 29579 / DSM 644 / CCUG 34227 / NCIMB 8303 / VKM B-1760 / Hildenborough) (Desulfovibrio vulgaris)).